We begin with the raw amino-acid sequence, 456 residues long: Putative F-box/LRR-repeat protein At3g18150 (456 aa).

An F-box domain is found at 30–78 (VDSISSLPDVILQHILSFIPTKLAITTSLLSKRWRHVWCDTPSLSFNDY). LRR repeat units lie at residues 177 to 202 (TCLL…TLDH), 203 to 213 (CGGLRVLDLSK), 228 to 253 (VPEL…KLPC), 278 to 303 (KADF…TLGG), 333 to 358 (IFQY…TLLT), and 396 to 422 (CLDV…DKMV).

The protein is Putative F-box/LRR-repeat protein At3g18150 of Arabidopsis thaliana (Mouse-ear cress).